We begin with the raw amino-acid sequence, 552 residues long: HTH-type transcriptional regulator SgrR (552 aa).

The region spanning 1–116 is the HTH marR-type domain; sequence MPSGRLQQQF…LISHLGRSFR (116 aa). A DNA-binding region (H-T-H motif) is located at residues 26–49; the sequence is LNELADLLNCSRRHMRTLLNTMQA. Residues 163 to 493 form a solute-binding region; that stretch reads ELEADIAHHW…RDWQDDAAQW (331 aa).

Functionally, activates the small RNA gene sgrS under glucose-phosphate stress conditions as well as yfdZ. Represses its own transcription under both stress and non-stress conditions. Might act as a sensor of the intracellular accumulation of phosphoglucose by binding these molecules in its C-terminal solute-binding domain. The polypeptide is HTH-type transcriptional regulator SgrR (Salmonella choleraesuis (strain SC-B67)).